The following is a 312-amino-acid chain: Phosphoribosylaminoimidazole-succinocarboxamide synthase (312 aa).

Belongs to the SAICAR synthetase family.

The catalysed reaction is 5-amino-1-(5-phospho-D-ribosyl)imidazole-4-carboxylate + L-aspartate + ATP = (2S)-2-[5-amino-1-(5-phospho-beta-D-ribosyl)imidazole-4-carboxamido]succinate + ADP + phosphate + 2 H(+). It participates in purine metabolism; IMP biosynthesis via de novo pathway; 5-amino-1-(5-phospho-D-ribosyl)imidazole-4-carboxamide from 5-amino-1-(5-phospho-D-ribosyl)imidazole-4-carboxylate: step 1/2. The chain is Phosphoribosylaminoimidazole-succinocarboxamide synthase from Legionella pneumophila (strain Lens).